Consider the following 243-residue polypeptide: NAD-dependent protein deacetylase (243 aa).

The region spanning 1–243 is the Deacetylase sirtuin-type domain; sequence MKHDLETLKH…VSVVKSLMTE (243 aa). Residues Ala-24, Phe-35, Arg-36, Gln-105, Ile-107, Asp-108, and His-123 each coordinate NAD(+). Phe-35 serves as a coordination point for nicotinamide. Residues Ile-107 and Asp-108 each contribute to the nicotinamide site. His-123 serves as the catalytic Proton acceptor. Positions 131, 134, 151, and 154 each coordinate Zn(2+). Residues Ser-192, Ser-193, Asn-215, and Asp-232 each coordinate NAD(+).

The protein belongs to the sirtuin family. Class U subfamily. It depends on Zn(2+) as a cofactor.

The protein localises to the cytoplasm. The catalysed reaction is N(6)-acetyl-L-lysyl-[protein] + NAD(+) + H2O = 2''-O-acetyl-ADP-D-ribose + nicotinamide + L-lysyl-[protein]. Its function is as follows. NAD-dependent protein deacetylase which modulates the activities of several enzymes which are inactive in their acetylated form. The chain is NAD-dependent protein deacetylase from Staphylococcus aureus (strain MRSA252).